The primary structure comprises 268 residues: Tryptophan synthase alpha chain (268 aa).

Catalysis depends on proton acceptor residues Glu49 and Asp60.

The protein belongs to the TrpA family. Tetramer of two alpha and two beta chains.

The enzyme catalyses (1S,2R)-1-C-(indol-3-yl)glycerol 3-phosphate + L-serine = D-glyceraldehyde 3-phosphate + L-tryptophan + H2O. Its pathway is amino-acid biosynthesis; L-tryptophan biosynthesis; L-tryptophan from chorismate: step 5/5. Its function is as follows. The alpha subunit is responsible for the aldol cleavage of indoleglycerol phosphate to indole and glyceraldehyde 3-phosphate. The polypeptide is Tryptophan synthase alpha chain (Xylella fastidiosa (strain 9a5c)).